The chain runs to 103 residues: Phosphoribosyl-ATP pyrophosphatase (103 aa).

The disordered stretch occupies residues 79–103 (SVQAELERREGKLSTTRDRKEIDEL). Basic and acidic residues predominate over residues 83–103 (ELERREGKLSTTRDRKEIDEL).

It belongs to the PRA-PH family.

It is found in the cytoplasm. The enzyme catalyses 1-(5-phospho-beta-D-ribosyl)-ATP + H2O = 1-(5-phospho-beta-D-ribosyl)-5'-AMP + diphosphate + H(+). The protein operates within amino-acid biosynthesis; L-histidine biosynthesis; L-histidine from 5-phospho-alpha-D-ribose 1-diphosphate: step 2/9. The polypeptide is Phosphoribosyl-ATP pyrophosphatase (Listeria welshimeri serovar 6b (strain ATCC 35897 / DSM 20650 / CCUG 15529 / CIP 8149 / NCTC 11857 / SLCC 5334 / V8)).